A 49-amino-acid chain; its full sequence is SPbeta prophage-derived uncharacterized protein YorN (49 aa).

This is SPbeta prophage-derived uncharacterized protein YorN (yorN) from Bacillus subtilis (strain 168).